The chain runs to 540 residues: CTP synthase (540 aa).

Positions 1 to 267 are amidoligase domain; sequence MTKYIFVTGG…DQKVCDFLHL (267 aa). S13 is a CTP binding site. S13 lines the UTP pocket. Residue 14–19 participates in ATP binding; the sequence is SLGKGI. L-glutamine is bound at residue Y54. D71 is a binding site for ATP. Positions 71 and 141 each coordinate Mg(2+). Residues 148 to 150, 188 to 193, and K224 contribute to the CTP site; these read DIE and KTKPTQ. Residues 188–193 and K224 contribute to the UTP site; that span reads KTKPTQ. One can recognise a Glutamine amidotransferase type-1 domain in the interval 294-537; that stretch reads TITLVGKYVE…IGAASGLPAQ (244 aa). L-glutamine is bound at residue G356. The Nucleophile; for glutamine hydrolysis role is filled by C383. L-glutamine-binding positions include 384–387, E407, and R465; that span reads LGMQ. Active-site residues include H510 and E512.

Belongs to the CTP synthase family. As to quaternary structure, homotetramer.

It catalyses the reaction UTP + L-glutamine + ATP + H2O = CTP + L-glutamate + ADP + phosphate + 2 H(+). The catalysed reaction is L-glutamine + H2O = L-glutamate + NH4(+). It carries out the reaction UTP + NH4(+) + ATP = CTP + ADP + phosphate + 2 H(+). The protein operates within pyrimidine metabolism; CTP biosynthesis via de novo pathway; CTP from UDP: step 2/2. With respect to regulation, allosterically activated by GTP, when glutamine is the substrate; GTP has no effect on the reaction when ammonia is the substrate. The allosteric effector GTP functions by stabilizing the protein conformation that binds the tetrahedral intermediate(s) formed during glutamine hydrolysis. Inhibited by the product CTP, via allosteric rather than competitive inhibition. Functionally, catalyzes the ATP-dependent amination of UTP to CTP with either L-glutamine or ammonia as the source of nitrogen. Regulates intracellular CTP levels through interactions with the four ribonucleotide triphosphates. The chain is CTP synthase from Lactobacillus johnsonii (strain CNCM I-12250 / La1 / NCC 533).